We begin with the raw amino-acid sequence, 551 residues long: RanBD1 domain-containing protein C584.03c (551 aa).

A RanBD1 domain is found at 1–309 (MDELLNVASH…LLLKYADDET (309 aa)). Ser-441 is modified (phosphoserine). Residues 522 to 551 (SVIPHSEPESSSKVINCQAKLNVEKEKKNP) are disordered.

It is found in the nucleus. The sequence is that of RanBD1 domain-containing protein C584.03c from Schizosaccharomyces pombe (strain 972 / ATCC 24843) (Fission yeast).